Reading from the N-terminus, the 196-residue chain is FMN-dependent NADH:quinone oxidoreductase (196 aa).

Residues Ser-10 and 17 to 19 (SYS) each bind FMN.

Belongs to the azoreductase type 1 family. As to quaternary structure, homodimer. FMN serves as cofactor.

The enzyme catalyses 2 a quinone + NADH + H(+) = 2 a 1,4-benzosemiquinone + NAD(+). It carries out the reaction N,N-dimethyl-1,4-phenylenediamine + anthranilate + 2 NAD(+) = 2-(4-dimethylaminophenyl)diazenylbenzoate + 2 NADH + 2 H(+). Functionally, quinone reductase that provides resistance to thiol-specific stress caused by electrophilic quinones. Also exhibits azoreductase activity. Catalyzes the reductive cleavage of the azo bond in aromatic azo compounds to the corresponding amines. The polypeptide is FMN-dependent NADH:quinone oxidoreductase (Metamycoplasma arthritidis (strain 158L3-1) (Mycoplasma arthritidis)).